Here is a 2614-residue protein sequence, read N- to C-terminus: Talin-B (2614 aa).

One can recognise an FERM domain in the interval 85 to 369; sequence RPLKVRLMDE…GYIEILMKKR (285 aa). The tract at residues 393–421 is disordered; it reads RGQTSQATTSSSLSGYDGNGGREGQYSAP. Positions 395–406 are enriched in low complexity; sequence QTSQATTSSSLS. 2 coiled-coil regions span residues 1938–1965 and 2033–2057; these read TQNI…ASGK and NKAI…LVQS. An I/LWEQ domain is found at 2219 to 2460; the sequence is LLFAAGESLE…SIRKKEYSDQ (242 aa). Residues 2454–2557 are disordered; the sequence is KKEYSDQTGN…AAPTAAAPNK (104 aa). The segment covering 2473–2487 has biased composition (polar residues); sequence KPTTSISVGITPTKR. Low complexity predominate over residues 2517 to 2537; the sequence is KKPAPSQAPSSPVAPVSAPVS. Positions 2538-2548 are enriched in pro residues; it reads KPSPKPAPKPA. Positions 2553–2614 constitute an HP domain; it reads AAPNKTYTLE…NNIKTKLGLF (62 aa).

The protein resides in the cytoplasm. The protein localises to the cytoskeleton. It localises to the cell cortex. Functionally, actin-binding protein required for multicellular morphogenesis. Substrate of pkgB and/or pkbA. The polypeptide is Talin-B (talB) (Dictyostelium discoideum (Social amoeba)).